The primary structure comprises 263 residues: Endonuclease 8 (263 aa).

P2 (schiff-base intermediate with DNA) is an active-site residue. E3 acts as the Proton donor in catalysis. The Proton donor; for beta-elimination activity role is filled by K53. The DNA site is built by Q70, R125, and N169. The FPG-type zinc-finger motif lies at 229 to 263 (KVFHRDGERCERCGGVIEKTTLSSRPFYWCPGCQH). R253 serves as the catalytic Proton donor; for delta-elimination activity.

Belongs to the FPG family. The cofactor is Zn(2+).

It carries out the reaction 2'-deoxyribonucleotide-(2'-deoxyribose 5'-phosphate)-2'-deoxyribonucleotide-DNA = a 3'-end 2'-deoxyribonucleotide-(2,3-dehydro-2,3-deoxyribose 5'-phosphate)-DNA + a 5'-end 5'-phospho-2'-deoxyribonucleoside-DNA + H(+). Its function is as follows. Involved in base excision repair of DNA damaged by oxidation or by mutagenic agents. Acts as a DNA glycosylase that recognizes and removes damaged bases. Has a preference for oxidized pyrimidines, such as thymine glycol, 5,6-dihydrouracil and 5,6-dihydrothymine. Has AP (apurinic/apyrimidinic) lyase activity and introduces nicks in the DNA strand. Cleaves the DNA backbone by beta-delta elimination to generate a single-strand break at the site of the removed base with both 3'- and 5'-phosphates. The polypeptide is Endonuclease 8 (Klebsiella pneumoniae (strain 342)).